A 194-amino-acid polypeptide reads, in one-letter code: Probable GTP-binding protein EngB (194 aa).

An EngB-type G domain is found at 22 to 194; the sequence is PLPEVALAGR…AWKAILHAIS (173 aa). GTP-binding positions include 30 to 37, 57 to 61, 75 to 78, 142 to 145, and 174 to 176; these read GRSNVGKS, GKTQT, DVPG, TKCD, and FSS. Mg(2+) contacts are provided by serine 37 and threonine 59.

This sequence belongs to the TRAFAC class TrmE-Era-EngA-EngB-Septin-like GTPase superfamily. EngB GTPase family. Requires Mg(2+) as cofactor.

In terms of biological role, necessary for normal cell division and for the maintenance of normal septation. The polypeptide is Probable GTP-binding protein EngB (Halalkalibacterium halodurans (strain ATCC BAA-125 / DSM 18197 / FERM 7344 / JCM 9153 / C-125) (Bacillus halodurans)).